Here is a 94-residue protein sequence, read N- to C-terminus: Integration host factor subunit beta (94 aa).

Belongs to the bacterial histone-like protein family. In terms of assembly, heterodimer of an alpha and a beta chain.

Its function is as follows. This protein is one of the two subunits of integration host factor, a specific DNA-binding protein that functions in genetic recombination as well as in transcriptional and translational control. The chain is Integration host factor subunit beta from Salmonella arizonae (strain ATCC BAA-731 / CDC346-86 / RSK2980).